The primary structure comprises 237 residues: MGNSVMEKIKGGLVVSCQALEDEPLHSAFIMSKMALAAVQGGAVGIRANTAKDIRAIQSEIDVPIIGIYKKDYDDSDVFITPTLKEVREICETGVEIVAMDATTRKRPHNEDLKEILSAIRKEFPNTLFMADTGSIEDVYYADSLGFDLIGTTLYGYTEETANKNISDDDFSHLKEVLKSTKRPVIAEGKIDSPSKARQVLTLGCYAVVVGGAVTRPQEITTRFTNEIQKIQEERGK.

This sequence belongs to the NanE family.

The catalysed reaction is an N-acyl-D-glucosamine 6-phosphate = an N-acyl-D-mannosamine 6-phosphate. It functions in the pathway amino-sugar metabolism; N-acetylneuraminate degradation; D-fructose 6-phosphate from N-acetylneuraminate: step 3/5. Functionally, converts N-acetylmannosamine-6-phosphate (ManNAc-6-P) to N-acetylglucosamine-6-phosphate (GlcNAc-6-P). In Listeria monocytogenes serotype 4a (strain HCC23), this protein is Putative N-acetylmannosamine-6-phosphate 2-epimerase.